Consider the following 174-residue polypeptide: Large ribosomal subunit protein uL10 (174 aa).

Belongs to the universal ribosomal protein uL10 family. As to quaternary structure, part of the ribosomal stalk of the 50S ribosomal subunit. The N-terminus interacts with L11 and the large rRNA to form the base of the stalk. The C-terminus forms an elongated spine to which L12 dimers bind in a sequential fashion forming a multimeric L10(L12)X complex.

In terms of biological role, forms part of the ribosomal stalk, playing a central role in the interaction of the ribosome with GTP-bound translation factors. The chain is Large ribosomal subunit protein uL10 from Synechococcus sp. (strain RCC307).